The following is a 154-amino-acid chain: MNNNTTDNSTLQQIAHAAVEPLGFEVLEVQVQSQGGEKIVLVRVDRLDEQPVTMEDLTKASRAAEAEFDRLDPVAGEYRLEFESPGSKRPLTRARHFERMLGLKARVRGEGHAFTAPIKAVSGDQVTFDVSGQDVTVSASAVQANLAEFPDRHR.

It belongs to the RimP family.

The protein resides in the cytoplasm. Functionally, required for maturation of 30S ribosomal subunits. The sequence is that of Ribosome maturation factor RimP from Deinococcus deserti (strain DSM 17065 / CIP 109153 / LMG 22923 / VCD115).